The following is a 212-amino-acid chain: Glutathione S-transferase P 1 (212 aa).

Residues 2 to 83 enclose the GST N-terminal domain; sequence PGYVLTYFPV…YLGNKHGLTG (82 aa). Glutathione contacts are provided by residues tyrosine 8, arginine 14, tryptophan 39, lysine 47, 54–55, and 67–68; these read QL and QS. Positions 85–206 constitute a GST C-terminal domain; it reads NDEERGHIDM…KSDARNKRPI (122 aa).

It belongs to the GST superfamily. Pi family. Homodimer. In terms of tissue distribution, expressed only in embryos. Not expressed in liver, lung, heart, kidney and ovary.

Its subcellular location is the cytoplasm. The protein resides in the mitochondrion. The protein localises to the nucleus. It carries out the reaction RX + glutathione = an S-substituted glutathione + a halide anion + H(+). In terms of biological role, conjugation of reduced glutathione to a wide number of exogenous and endogenous hydrophobic electrophiles. Highly active towards 1-chloro-2,4-dinitrobenzene and organic isothiocyanates, but shows no detectable activity towards 1,2-dichloro-4-nitrobenzene, p-nitrobenzylchloride, trans-4-phenyl-3-buten-2-one (tPBO) and ethacrynic acid. May be associated with cellular proliferation. The protein is Glutathione S-transferase P 1 (gstp1) of Xenopus laevis (African clawed frog).